We begin with the raw amino-acid sequence, 258 residues long: NAD kinase (258 aa).

The Proton acceptor role is filled by aspartate 44. NAD(+) contacts are provided by residues 44 to 45, 116 to 117, aspartate 146, alanine 154, and 157 to 162; these read DG, NE, and TAYNLS.

Belongs to the NAD kinase family. It depends on a divalent metal cation as a cofactor.

It localises to the cytoplasm. It catalyses the reaction NAD(+) + ATP = ADP + NADP(+) + H(+). Involved in the regulation of the intracellular balance of NAD and NADP, and is a key enzyme in the biosynthesis of NADP. Catalyzes specifically the phosphorylation on 2'-hydroxyl of the adenosine moiety of NAD to yield NADP. In Zymomonas mobilis subsp. mobilis (strain ATCC 31821 / ZM4 / CP4), this protein is NAD kinase.